A 148-amino-acid polypeptide reads, in one-letter code: Large ribosomal subunit protein bL9 (148 aa).

Belongs to the bacterial ribosomal protein bL9 family.

In terms of biological role, binds to the 23S rRNA. The protein is Large ribosomal subunit protein bL9 of Solibacter usitatus (strain Ellin6076).